Consider the following 134-residue polypeptide: Global transcriptional regulator Spx (134 aa).

Cys10 and Cys13 are disulfide-bonded.

The protein belongs to the ArsC family. Spx subfamily. In terms of assembly, interacts with the C-terminal domain of the alpha subunit of the RNAP.

It localises to the cytoplasm. Global transcriptional regulator that plays a key role in stress response and exerts either positive or negative regulation of genes. Acts by interacting with the C-terminal domain of the alpha subunit of the RNA polymerase (RNAP). This interaction can enhance binding of RNAP to the promoter region of target genes and stimulate their transcription, or block interaction of RNAP with activator. The protein is Global transcriptional regulator Spx of Streptococcus pyogenes serotype M1.